The chain runs to 203 residues: CASP-like protein 5A2 (203 aa).

Over 1-63 (MRASRPVVHP…KDPPGAPGTP (63 aa)) the chain is Cytoplasmic. A disordered region spans residues 39–58 (AAHGGENAQPRGVRMKDPPG). The helical transmembrane segment at 64 to 84 (GGLGLRLVQAFFAAAALAVMA) threads the bilayer. The Extracellular segment spans residues 85–94 (STDDFPSVSA). A helical transmembrane segment spans residues 95–115 (FCYLVAAAILQCLWSLSLAVV). Residues 116 to 139 (DIYALLVKRSLRNPQAVCIFTIGD) are Cytoplasmic-facing. Residues 140 to 160 (GITGTLTLGAACASAGITVLI) traverse the membrane as a helical segment. Topologically, residues 161-177 (GNDLNICANNHCASFET) are extracellular. Residues 178-198 (ATAMAFISWFALAPSCVLNFW) form a helical membrane-spanning segment. Over 199-203 (SMASR) the chain is Cytoplasmic.

Belongs to the Casparian strip membrane proteins (CASP) family. As to quaternary structure, homodimer and heterodimers.

The protein resides in the cell membrane. This is CASP-like protein 5A2 from Oryza sativa subsp. indica (Rice).